We begin with the raw amino-acid sequence, 290 residues long: Serpentine receptor class U-26 (290 aa).

The next 7 helical transmembrane spans lie at 31–51, 70–90, 112–134, 158–178, 185–205, 213–233, and 262–282; these read LPML…IIIL, LLSA…ADFL, FITI…PFLV, FSIP…FPAI, AYPF…FGLV, NTLF…LLLI, and MIFS…LHIV.

Belongs to the nematode receptor-like protein sru family.

It is found in the membrane. The sequence is that of Serpentine receptor class U-26 (sru-26) from Caenorhabditis elegans.